A 471-amino-acid chain; its full sequence is Probable anion transporter 5, chloroplastic (471 aa).

Residues 1–59 (MAASASASALQAERCLLVGVGAGPRRHRLPLRMPPPLHAPPALLLLPHRRRRRWPPAVR) constitute a chloroplast transit peptide. Residues 56–76 (PAVRASPGEGGGGGGGGGGGG) form a disordered region. Helical transmembrane passes span 62–82 (PGEG…AGAL), 103–123 (IGVV…GFMP), 162–182 (VVFG…PPII), and 185–205 (LGWE…CLGF). Over residues 63–76 (GEGGGGGGGGGGGG) the composition is skewed to gly residues. The disordered stretch occupies residues 226-247 (GQSPSGSSDLISSSVSPKSSES). Positions 228–247 (SPSGSSDLISSSVSPKSSES) are enriched in low complexity. 6 helical membrane-spanning segments follow: residues 270-290 (VWAM…CLSW), 307-327 (AWVS…AAPF), 348-368 (IAFL…GVPP), 371-391 (IVAF…GLYC), 403-423 (ILLG…VALT), and 435-455 (ISLF…WLAF).

It belongs to the major facilitator superfamily. Sodium/anion cotransporter (TC 2.A.1.14) family.

The protein localises to the plastid. It localises to the chloroplast membrane. Functionally, probable anion transporter. In Oryza sativa subsp. japonica (Rice), this protein is Probable anion transporter 5, chloroplastic (PHT4;5).